A 251-amino-acid polypeptide reads, in one-letter code: Protein phosphatase 1 regulatory subunit 35 (251 aa).

Disordered regions lie at residues Leu58 to His99 and Pro180 to Pro235. Residues Pro76–His99 show a composition bias toward basic and acidic residues.

The protein belongs to the PPP1R35 family.

It localises to the cytoplasm. Its subcellular location is the cytoskeleton. The protein resides in the microtubule organizing center. The protein localises to the centrosome. It is found in the centriole. Its function is as follows. During centriole duplication, may play a role in the centriole elongation by promoting the recruitment of the microtubule-binding elongation machinery, leading to the centriole to centrosome conversion. In addition may play a role in the primary cilia assembly. The chain is Protein phosphatase 1 regulatory subunit 35 from Danio rerio (Zebrafish).